A 135-amino-acid polypeptide reads, in one-letter code: uncharacterized protein (135 aa).

3 consecutive transmembrane segments (helical) span residues A13 to L35, V82 to I101, and I108 to L130.

The protein localises to the cell membrane. This is an uncharacterized protein from Archaeoglobus fulgidus (strain ATCC 49558 / DSM 4304 / JCM 9628 / NBRC 100126 / VC-16).